A 230-amino-acid chain; its full sequence is Orotidine 5'-phosphate decarboxylase (230 aa).

Substrate-binding positions include D9, K31, 58 to 67 (DLKFFDIPNT), T120, R180, Q188, G208, and R209. The Proton donor role is filled by K60.

The protein belongs to the OMP decarboxylase family. Type 1 subfamily. Homodimer.

It carries out the reaction orotidine 5'-phosphate + H(+) = UMP + CO2. The protein operates within pyrimidine metabolism; UMP biosynthesis via de novo pathway; UMP from orotate: step 2/2. In terms of biological role, catalyzes the decarboxylation of orotidine 5'-monophosphate (OMP) to uridine 5'-monophosphate (UMP). The chain is Orotidine 5'-phosphate decarboxylase from Maridesulfovibrio salexigens (strain ATCC 14822 / DSM 2638 / NCIMB 8403 / VKM B-1763) (Desulfovibrio salexigens).